The primary structure comprises 734 residues: MATKFPKFSQALAQDPTTRRLWFGIATAHDFESHDGMTEERLYQKIFASHFGQLAIIFLWTSGNLFHVAWQGNFEQWVQDPLHIRPIAHAIWDPHFGQAAVEAFTRGGASGPVNISTSGVYQWWYTIGIRTNQELYVGSIFLLVLAGLFLFAGWLHLQPSFQPALSWFKNAESRLNHHLAGLFGVSSLAWTGHLVHVAIPESRGQHVGWDNFLTVLPHPAGLTPFFTGNWAAYAENPDSLSQLFGTGEGSGTAILTFLGGFHPQTQSLWLTDMAHHHLAIAVVFILAGHMYRTIFGIGHSMREILEAQTPPSGRLGAGHKGLYDTVNNSLHFQLGLALASVGTICSLVAQHMYSLPPYAFLAQDFTTQASLYTHHQYIAGFIMCGAFAHGAIFFVRDYDPEANRGNVLARVLDHKEAIISHLSWVSLFLGFHTLGLYVHNDVVQAFGTPEKQILIEPVFAQWIQAAHGKTVYGFDFLLSSATSAPSLAGQSLWLPGWLQGINSDTNSLFLTIGPGDFLVHHAIALGLHTTTLILVKGALDARGSKLMPDKKDFGYSFPCDGPGRGGTCDISAWDAFYLAVFWMLNTIGWVTFYFHWKHLGIWQGNVNQFNESSTYLMGWLRDYLWLNSSQLINGYNPFGMNSLSVWAWMFLFGHLIYATGFMFLISWRGYWQELIETLAWAHERTPLANLVRWRDKPVALSIVQARLVGLTHFSVGYVLTYAAFLIASTSGKFG.

Helical transmembrane passes span 46–69 (IFAS…FHVA), 135–158 (LYVG…LHLQ), 175–199 (LNHH…HVAI), 273–291 (MAHH…GHMY), 330–353 (LHFQ…QHMY), 369–395 (ASLY…IFFV), 417–439 (AIIS…LYVH), and 517–535 (FLVH…LILV). Cys-559 and Cys-568 together coordinate [4Fe-4S] cluster. 2 helical membrane-spanning segments follow: residues 575–596 (AFYL…YFHW) and 643–665 (LSVW…MFLI). Positions 654, 662, and 670 each coordinate chlorophyll a. Phylloquinone is bound at residue Trp-671. The chain crosses the membrane as a helical span at residues 707-727 (LVGLTHFSVGYVLTYAAFLIA).

The protein belongs to the PsaA/PsaB family. In terms of assembly, the PsaA/B heterodimer binds the P700 chlorophyll special pair and subsequent electron acceptors. PSI consists of a core antenna complex that captures photons, and an electron transfer chain that converts photonic excitation into a charge separation. The eukaryotic PSI reaction center is composed of at least 11 subunits. Requires P700 is a chlorophyll a/chlorophyll a' dimer, A0 is one or more chlorophyll a, A1 is one or both phylloquinones and FX is a shared 4Fe-4S iron-sulfur center. as cofactor.

The protein localises to the plastid. It localises to the chloroplast thylakoid membrane. The catalysed reaction is reduced [plastocyanin] + hnu + oxidized [2Fe-2S]-[ferredoxin] = oxidized [plastocyanin] + reduced [2Fe-2S]-[ferredoxin]. PsaA and PsaB bind P700, the primary electron donor of photosystem I (PSI), as well as the electron acceptors A0, A1 and FX. PSI is a plastocyanin/cytochrome c6-ferredoxin oxidoreductase, converting photonic excitation into a charge separation, which transfers an electron from the donor P700 chlorophyll pair to the spectroscopically characterized acceptors A0, A1, FX, FA and FB in turn. Oxidized P700 is reduced on the lumenal side of the thylakoid membrane by plastocyanin or cytochrome c6. This Chlorella vulgaris (Green alga) protein is Photosystem I P700 chlorophyll a apoprotein A2.